Reading from the N-terminus, the 452-residue chain is MSHAAAAKPATARKSQALSGTARVPGDKSISHRSFMFGGLASGETRITGLLEGEDVMRTGAAMKAMGAHIEKRGAEWVIRGTGNGALLQPEGPLDFGNAGTGSRLTMGLVGTYDMETTFIGDASLSGRPMGRVLEPLRQMGVQVLKATPGDRMPITLHGPKHAAPITYRVPMASAQVKSAVLLAGLNTPGITTVIEPVMTRDHTEKMLKGFGANLSVETDERGVRHIFIEGQGRLTGQTIAVPGDPSSAGFPLVAALIVPGSDITIENVLMNPTRTGLLLTLQEMGGQIDILNPRNAGGEDVADLRVRYSELKGVAVPPERAPSMIDEYPVLAVAASFAEGETLMQGLEELRVKESDRLSAVANGLKLNGVDCTEGEASLAVRGRPGGKGLGGHPNGLDTTVQTHLDHRIAMSFLVMGLATEKPVTIDDQAMIATSFPEFMGLMTGLGAEIR.

Residues 1 to 17 (MSHAAAAKPATARKSQA) are compositionally biased toward low complexity. The interval 1 to 26 (MSHAAAAKPATARKSQALSGTARVPG) is disordered. 3-phosphoshikimate-binding residues include lysine 28, serine 29, and arginine 33. Residue lysine 28 participates in phosphoenolpyruvate binding. The phosphoenolpyruvate site is built by glycine 100 and arginine 128. Residues serine 174, glutamine 176, aspartate 327, and lysine 354 each coordinate 3-phosphoshikimate. Glutamine 176 contacts phosphoenolpyruvate. Aspartate 327 functions as the Proton acceptor in the catalytic mechanism. The phosphoenolpyruvate site is built by arginine 358 and arginine 409.

Belongs to the EPSP synthase family. In terms of assembly, monomer.

Its subcellular location is the cytoplasm. It carries out the reaction 3-phosphoshikimate + phosphoenolpyruvate = 5-O-(1-carboxyvinyl)-3-phosphoshikimate + phosphate. The protein operates within metabolic intermediate biosynthesis; chorismate biosynthesis; chorismate from D-erythrose 4-phosphate and phosphoenolpyruvate: step 6/7. Catalyzes the transfer of the enolpyruvyl moiety of phosphoenolpyruvate (PEP) to the 5-hydroxyl of shikimate-3-phosphate (S3P) to produce enolpyruvyl shikimate-3-phosphate and inorganic phosphate. The chain is 3-phosphoshikimate 1-carboxyvinyltransferase from Mesorhizobium japonicum (strain LMG 29417 / CECT 9101 / MAFF 303099) (Mesorhizobium loti (strain MAFF 303099)).